A 460-amino-acid polypeptide reads, in one-letter code: Elongation factor 1-alpha (460 aa).

Residue G2 is modified to N,N,N-trimethylglycine. An N6,N6-dimethyllysine; alternate modification is found at K3. Position 3 is an N6-methyllysine; alternate (K3). The tr-type G domain occupies 6 to 241 (KTHINVVVIG…DSIEPPKRPT (236 aa)). The G1 stretch occupies residues 15–22 (GHVDSGKS). Position 15 to 22 (15 to 22 (GHVDSGKS)) interacts with GTP. A G2 region spans residues 71–75 (GITID). K80 carries the N6,N6,N6-trimethyllysine modification. A G3 region spans residues 92-95 (DAPG). GTP is bound by residues 92 to 96 (DAPGH) and 154 to 157 (NKMD). Positions 154 to 157 (NKMD) are G4. Residues 193–195 (SGF) are G5. K317 carries the post-translational modification N6,N6-dimethyllysine; alternate. Position 317 is an N6-methyllysine; alternate (K317). K391 is subject to N6-methyllysine.

It belongs to the TRAFAC class translation factor GTPase superfamily. Classic translation factor GTPase family. EF-Tu/EF-1A subfamily.

It is found in the cytoplasm. Its function is as follows. This protein promotes the GTP-dependent binding of aminoacyl-tRNA to the A-site of ribosomes during protein biosynthesis. The protein is Elongation factor 1-alpha (tef1) of Hypocrea jecorina (Trichoderma reesei).